A 465-amino-acid polypeptide reads, in one-letter code: Lactaldehyde dehydrogenase (465 aa).

220-225 contributes to the NAD(+) binding site; sequence GSVEVG. Residues Glu240 and Cys274 contribute to the active site.

Belongs to the aldehyde dehydrogenase family. As to quaternary structure, homotetramer.

The enzyme catalyses (S)-lactaldehyde + NAD(+) + H2O = (S)-lactate + NADH + 2 H(+). It participates in cofactor biosynthesis; coenzyme F420 biosynthesis. In terms of biological role, involved in F420 biosynthesis through the oxidation of lactaldehyde to lactate. This is Lactaldehyde dehydrogenase from Methanococcus vannielii (strain ATCC 35089 / DSM 1224 / JCM 13029 / OCM 148 / SB).